We begin with the raw amino-acid sequence, 282 residues long: tRNA (guanine-N(1)-)-methyltransferase (282 aa).

Residues G157 and 177–182 (VGDYIL) contribute to the S-adenosyl-L-methionine site.

This sequence belongs to the RNA methyltransferase TrmD family. As to quaternary structure, homodimer.

The protein resides in the cytoplasm. The enzyme catalyses guanosine(37) in tRNA + S-adenosyl-L-methionine = N(1)-methylguanosine(37) in tRNA + S-adenosyl-L-homocysteine + H(+). In terms of biological role, specifically methylates guanosine-37 in various tRNAs. The protein is tRNA (guanine-N(1)-)-methyltransferase of Rickettsia bellii (strain RML369-C).